Consider the following 409-residue polypeptide: bZIP transcription factor 16 (409 aa).

Positions 1–16 are enriched in basic and acidic residues; it reads MASNEMEKSSKEKEPK. 4 disordered regions span residues 1–63, 118–236, 274–327, and 362–409; these read MASN…VASS, NGMT…LPVS, MHGK…LRKQ, and TTEN…KDST. Positions 24 to 34 are enriched in low complexity; that stretch reads APPSSQEPSSA. Basic and acidic residues predominate over residues 133-145; the sequence is GDAKQSEVKEKLP. Residues 152–178 show a composition bias toward polar residues; that stretch reads SLGSLNMITGKNNEPGKNSGASANGAY. Positions 179–203 are enriched in low complexity; it reads SKSGESASDGSSEGSDGNSQNDSGS. A compositionally biased stretch (polar residues) spans 216-228; sequence NGGSANGPQNGSA. Positions 305–368 constitute a bZIP domain; it reads ELKRQRRKQS…EELTTENTSL (64 aa). Residues 307–323 carry the Bipartite nuclear localization signal motif; sequence KRQRRKQSNRESARRSR. The basic motif stretch occupies residues 307-326; sequence KRQRRKQSNRESARRSRLRK. Positions 314-327 are enriched in basic and acidic residues; it reads SNRESARRSRLRKQ. The interval 333–368 is leucine-zipper; it reads LAQRAEVLNEENTNLRAEINKLKSQCEELTTENTSL. The segment covering 398-409 has biased composition (basic and acidic residues); that stretch reads AERKVDSYKDST.

The protein belongs to the bZIP family. As to quaternary structure, monomer, homodimer and heterodimers with BZIP68 and GBF1/BZIP41. Heterodimers with GBF2/BZIP54 and GBF3/BZIP55. Binds DNA as monomer and forms homo- and heterodimers. The monomeric form is redox regulated. Interacts with GIP1.

The protein resides in the nucleus. In terms of biological role, transcriptional activator that binds to the G-box motif (5'-CACGTG-3') and other cis-acting elements with 5'-ACGT-3' core, such as Hex, C-box and as-1 motifs. Possesses high binding affinity to G-box, much lower affinity to Hex and C-box, and little affinity to as-1 element. G-box and G-box-like motifs are cis-acting elements defined in promoters of certain plant genes which are regulated by such diverse stimuli as light-induction or hormone control. Binds to the G-box motif 5'-CACGTG-3' of LHCB2.4 (At3g27690) promoter. May act as transcriptional repressor in light-regulated expression of LHCB2.4. Binds DNA as monomer. DNA-binding activity is redox-dependent. In Arabidopsis thaliana (Mouse-ear cress), this protein is bZIP transcription factor 16.